Here is a 190-residue protein sequence, read N- to C-terminus: Xanthine phosphoribosyltransferase (190 aa).

Xanthine contacts are provided by L20 and N27. 129–133 (ASGSA) is a binding site for 5-phospho-alpha-D-ribose 1-diphosphate. K157 is a xanthine binding site.

This sequence belongs to the purine/pyrimidine phosphoribosyltransferase family. Xpt subfamily. As to quaternary structure, homodimer.

Its subcellular location is the cytoplasm. The enzyme catalyses XMP + diphosphate = xanthine + 5-phospho-alpha-D-ribose 1-diphosphate. It participates in purine metabolism; XMP biosynthesis via salvage pathway; XMP from xanthine: step 1/1. Its function is as follows. Converts the preformed base xanthine, a product of nucleic acid breakdown, to xanthosine 5'-monophosphate (XMP), so it can be reused for RNA or DNA synthesis. This Clostridium tetani (strain Massachusetts / E88) protein is Xanthine phosphoribosyltransferase.